Reading from the N-terminus, the 565-residue chain is 2-isopropylmalate synthase (565 aa).

A Pyruvate carboxyltransferase domain is found at Pro37–Asp312. Mg(2+) is bound by residues Asp46, His251, His253, and Asn287. Residues Glu446–Ser565 form a regulatory domain region.

It belongs to the alpha-IPM synthase/homocitrate synthase family. LeuA type 2 subfamily. Homodimer. Mg(2+) serves as cofactor.

Its subcellular location is the cytoplasm. The enzyme catalyses 3-methyl-2-oxobutanoate + acetyl-CoA + H2O = (2S)-2-isopropylmalate + CoA + H(+). The protein operates within amino-acid biosynthesis; L-leucine biosynthesis; L-leucine from 3-methyl-2-oxobutanoate: step 1/4. Catalyzes the condensation of the acetyl group of acetyl-CoA with 3-methyl-2-oxobutanoate (2-ketoisovalerate) to form 3-carboxy-3-hydroxy-4-methylpentanoate (2-isopropylmalate). This Parafrankia sp. (strain EAN1pec) protein is 2-isopropylmalate synthase.